We begin with the raw amino-acid sequence, 466 residues long: MKSIDYVNPVKNQVPKVGFVSLGCPKALVDSERILTQLRVEGYDIVPSYDAADVVVVNTCGFIDSAVTESLDAIGEAMNANGKVIVTGCLGKRPEQIREAYPQVLAVSGPQDYQSVMEAVHAALPPRHDPFVDLVPDYGIKLTPRHYAYLKISEGCNHRCSFCIIPSMRGDLVSRPVDEVLCEAERLVRGGVKELLVVSQDTSAYGVDLKYAERPWRDRMYQTRMKALCEGLSELGVWTRLHYVYPYPHVDDVLPLMAEGKLLPYLDIPFQHASPRILKLMKRPGAVEKTLQRVQRWKAMCPEITVRSTFIVGFPGETDAEFESLLDFLDQAQLDRVGAFAYSPVHGASANALPDPVPEEVKQERLARFMAKQAEISALRLEAKIGSVQQCLVDLIEDDIAVARSRADAPEIDGLVHIQNGGELGLKVGDLVDVEITDSDEHDLFGDALPANVVPQQGRALNLQMV.

One can recognise an MTTase N-terminal domain in the interval 15-125 (PKVGFVSLGC…VMEAVHAALP (111 aa)). The [4Fe-4S] cluster site is built by Cys24, Cys60, Cys89, Cys156, Cys160, and Cys163. The region spanning 142 to 380 (LTPRHYAYLK…AKQAEISALR (239 aa)) is the Radical SAM core domain. In terms of domain architecture, TRAM spans 382 to 450 (EAKIGSVQQC…EHDLFGDALP (69 aa)).

Belongs to the methylthiotransferase family. RimO subfamily. [4Fe-4S] cluster is required as a cofactor.

The protein localises to the cytoplasm. It catalyses the reaction L-aspartate(89)-[ribosomal protein uS12]-hydrogen + (sulfur carrier)-SH + AH2 + 2 S-adenosyl-L-methionine = 3-methylsulfanyl-L-aspartate(89)-[ribosomal protein uS12]-hydrogen + (sulfur carrier)-H + 5'-deoxyadenosine + L-methionine + A + S-adenosyl-L-homocysteine + 2 H(+). Functionally, catalyzes the methylthiolation of an aspartic acid residue of ribosomal protein uS12. In Xanthomonas oryzae pv. oryzae (strain MAFF 311018), this protein is Ribosomal protein uS12 methylthiotransferase RimO.